The primary structure comprises 362 residues: Serine/threonine-protein kinase SBK2 (362 aa).

Basic and acidic residues predominate over residues 1-11; it reads MPGKQSEDRPM. The segment at 1 to 20 is disordered; the sequence is MPGKQSEDRPMEVAAVEDGG. The region spanning 62–330 is the Protein kinase domain; it reads YEEVRPLGQG…IKSYLGQPWK (269 aa). Residues 68–76 and lysine 91 each bind ATP; that span reads LGQGRFGRV. The active-site Proton acceptor is the aspartate 183. The disordered stretch occupies residues 317–362; that stretch reads PVSSIKSYLGQPWKQREEGAEELTKELREDGSRGGQEAAKGEQPAC. The span at 330–348 shows a compositional bias: basic and acidic residues; sequence KQREEGAEELTKELREDGS.

The protein belongs to the protein kinase superfamily. Ser/Thr protein kinase family. STKL subfamily.

It catalyses the reaction L-seryl-[protein] + ATP = O-phospho-L-seryl-[protein] + ADP + H(+). It carries out the reaction L-threonyl-[protein] + ATP = O-phospho-L-threonyl-[protein] + ADP + H(+). The sequence is that of Serine/threonine-protein kinase SBK2 (Sbk2) from Rattus norvegicus (Rat).